A 164-amino-acid chain; its full sequence is Translocator protein homolog (164 aa).

Helical transmembrane passes span 16 to 34 (WSASLVPVACGWFIGNSYK), 52 to 72 (SAFGPAWTLLYLTMGYASHLA), 89 to 106 (ILYIAQLAANFAWMPLFY), 112 to 132 (KLALADLGILTGLVGWLAKTW), and 141 to 163 (KWLIPYLAWLGYAGYLNLGYCLL).

It belongs to the TspO/BZRP family.

It is found in the mitochondrion membrane. Functionally, may play a role in the transport of porphyrins and heme. The protein is Translocator protein homolog of Schizosaccharomyces pombe (strain 972 / ATCC 24843) (Fission yeast).